The primary structure comprises 323 residues: MGTAAAAAAAGEGARGPSPAAVSLGLGVAVVSSLVNGSTFVLQKKGIVRAKRRGTSYLTDIVWWAGTIAMAVGQIGNFLAYTAVPTVLVTPLGALGVPFGSILASYLLKEKLNILGKLGCLLSCAGSVVLIIHSPKSESVTTQAELEEKLTNPVFVGYLCIVLLMLLLLIFWIAPAHGPTNIMVYISICSLLGSFTVPSTKGIGLAAQDILHNNPSSQRALCLCLVLLAVLGCSIIVQFRYINKALECFDSSVFGAIYYVVFTTLVLLASAILFREWSNVGLVDFLGMACGFTTVSVGIVLIQVFKEFNFNLGEMNKSNMKTD.

Residues 1–21 (MGTAAAAAAAGEGARGPSPAA) lie on the Extracellular side of the membrane. A helical transmembrane segment spans residues 22 to 42 (VSLGLGVAVVSSLVNGSTFVL). Residues 43-60 (QKKGIVRAKRRGTSYLTD) lie on the Cytoplasmic side of the membrane. Residues 61-81 (IVWWAGTIAMAVGQIGNFLAY) traverse the membrane as a helical segment. Position 82 (T82) is a topological domain, extracellular. Residues 83–103 (AVPTVLVTPLGALGVPFGSIL) traverse the membrane as a helical segment. Residues 104-111 (ASYLLKEK) lie on the Cytoplasmic side of the membrane. The chain crosses the membrane as a helical span at residues 112–132 (LNILGKLGCLLSCAGSVVLII). Residues 133 to 153 (HSPKSESVTTQAELEEKLTNP) lie on the Extracellular side of the membrane. Residues 154–174 (VFVGYLCIVLLMLLLLIFWIA) form a helical membrane-spanning segment. Over 175–177 (PAH) the chain is Cytoplasmic. Residues 178-198 (GPTNIMVYISICSLLGSFTVP) form a helical membrane-spanning segment. Residues 199–218 (STKGIGLAAQDILHNNPSSQ) are Extracellular-facing. Residues 219–239 (RALCLCLVLLAVLGCSIIVQF) traverse the membrane as a helical segment. Over 240 to 253 (RYINKALECFDSSV) the chain is Cytoplasmic. Residues 254–274 (FGAIYYVVFTTLVLLASAILF) traverse the membrane as a helical segment. At 275 to 284 (REWSNVGLVD) the chain is on the extracellular side. Residues 285–305 (FLGMACGFTTVSVGIVLIQVF) form a helical membrane-spanning segment. The Cytoplasmic segment spans residues 306–323 (KEFNFNLGEMNKSNMKTD).

It belongs to the NIPA family. Homodimer. As to expression, widely expressed. Predominantly expressed in neuronal tissues. Brain, heart, kidney, liver and colon (at protein level).

The protein resides in the cell membrane. The protein localises to the early endosome. It catalyses the reaction Mg(2+)(in) = Mg(2+)(out). In terms of biological role, acts as a Mg(2+) transporter. Can also transport other divalent cations such as Fe(2+), Sr(2+), Ba(2+), Zn(2+) and Co(2+) but to a much less extent than Mg(2+). The protein is Magnesium transporter NIPA1 (Nipa1) of Mus musculus (Mouse).